An 846-amino-acid chain; its full sequence is Aminopeptidase N (846 aa).

Residues Glu120 and 252–256 (GAMEN) each bind substrate. His288 lines the Zn(2+) pocket. The active-site Proton acceptor is Glu289. The Zn(2+) site is built by His292 and Glu311.

This sequence belongs to the peptidase M1 family. Monomer. The cofactor is Zn(2+).

It is found in the cytoplasm. It carries out the reaction Release of an N-terminal amino acid, Xaa-|-Yaa- from a peptide, amide or arylamide. Xaa is preferably Ala, but may be most amino acids including Pro (slow action). When a terminal hydrophobic residue is followed by a prolyl residue, the two may be released as an intact Xaa-Pro dipeptide.. In terms of biological role, aminopeptidase with broad substrate specificity to several peptides. It has more affinity for oligopeptides than for dipeptides. It plays an essential role in the metabolism, it may be involved in nitrogen supply or protein turnover. The protein is Aminopeptidase N (pepN) of Lactococcus lactis subsp. cremoris (strain MG1363).